The following is a 263-amino-acid chain: uncharacterized protein (263 aa).

This sequence belongs to the flavoredoxin family. FMN serves as cofactor.

This is an uncharacterized protein from Aeropyrum pernix (strain ATCC 700893 / DSM 11879 / JCM 9820 / NBRC 100138 / K1).